Consider the following 258-residue polypeptide: MDPIALQAGYDLLGDGRPETLWLGIGTLLMLIGTFYFLVRGWGVTDKDAREYYAVTILVPGIASAAYLSMFFGIGLTEVTVGGEMLDIYYARYADWLFTTPLLLLDLALLAKVDRVTIGTLVGVDALMIVTGLIGALSHTAIARYSWWLFSTICMIVVLYFLATSLRSAAKERGPEVASTFNTLTALVLVLWTAYPILWIIGTEGAGVVGLGIETLLFMVLDVTAKVGFGFILLRSRAILGDTEAPEPSAGADVSAAD.

Positions 1–6 are excised as a propeptide; it reads MDPIAL. The residue at position 7 (Gln-7) is a Pyrrolidone carboxylic acid. Residues 7–18 lie on the Extracellular side of the membrane; sequence QAGYDLLGDGRP. The chain crosses the membrane as a helical span at residues 19-40; sequence ETLWLGIGTLLMLIGTFYFLVR. Residues 41–49 are Cytoplasmic-facing; the sequence is GWGVTDKDA. A helical membrane pass occupies residues 50-71; it reads REYYAVTILVPGIASAAYLSMF. The Extracellular segment spans residues 72–89; it reads FGIGLTEVTVGGEMLDIY. Residues 90–111 form a helical membrane-spanning segment; that stretch reads YARYADWLFTTPLLLLDLALLA. Residues 112–114 lie on the Cytoplasmic side of the membrane; that stretch reads KVD. Residues 115–137 form a helical membrane-spanning segment; it reads RVTIGTLVGVDALMIVTGLIGAL. Topologically, residues 138–141 are extracellular; it reads SHTA. Residues 142 to 170 form a helical membrane-spanning segment; that stretch reads IARYSWWLFSTICMIVVLYFLATSLRSAA. The Cytoplasmic portion of the chain corresponds to 171–173; that stretch reads KER. Residues 174–202 form a helical membrane-spanning segment; it reads GPEVASTFNTLTALVLVLWTAYPILWIIG. Topologically, residues 203-210 are extracellular; the sequence is TEGAGVVG. The chain crosses the membrane as a helical span at residues 211 to 243; it reads LGIETLLFMVLDVTAKVGFGFILLRSRAILGDT. Position 226 is an N6-(retinylidene)lysine (Lys-226). The Cytoplasmic segment spans residues 244–258; the sequence is EAPEPSAGADVSAAD.

The protein belongs to the archaeal/bacterial/fungal opsin family.

The protein localises to the cell membrane. In terms of biological role, light-driven proton pump. The chain is Archaerhodopsin-3 (aop3) from Halorubrum sodomense.